We begin with the raw amino-acid sequence, 716 residues long: MDMSKKKSKRASPIESSQEEIAISTSKTATTEKPKKTKTTTKKKASQPSQEVVMETESEVEITTTTTSTSTTNNNNITTTSTSSQQSNGTLSSSSSPTIQSIPTTPISKYIPSLSQIGTPLSPNRAAQRLREKDELSLIHNRLKSALKKLESAETELEKKNQEYEELDQKHTATIKQLKQRSDQVEKQLIEEQNQNSDLTSNRNILENELKSKESVWKKEKDEILLKFQESINKLNQENSLAQSQLKSEIVSKEYEIDGLKSEINRLKDDLQYRIREGEEKSRKLLENEYNRFKGKEEEYNQLIVSKDEEIKKYKFELKEKEKSSNAMNKKENELNNLIQAHERQIEDMRDSINREWELKAAQMMEEHHARTIHLQQAVDSFNEEKERIKSQMETLNGQIEDINIKNNEYEDRIKEMNVLLSQKDNSIGELGVEIEESKKKMRKQMADLKSKDGQIALLQIEINTKDNKCNTLQTETNRLKSELYSITNQIDPEIPLDPEINSLKELVKGFEKTVDDRKRKRSKLQHEFNAAANQDQNGMTIEEQSSTSTTTTTSATGSSSSTSHLDNIDSSKLPTGPEQSELFNPDTVSFSLVDSNQEFIKLSVHGDMDNGLSISKWRLIVVKPDGSKSGFSFPDGIQPFKGIKSVTVWTGRPRPQGTPTENEFYWARTELWTSPVEGTIVKLVSPSEETTTVTLPADGIYQKPSSAGKSNCLIM.

Composition is skewed to basic residues over residues 1 to 10 (MDMSKKKSKR) and 35 to 45 (KKTKTTTKKKA). The interval 1-107 (MDMSKKKSKR…TIQSIPTTPI (107 aa)) is disordered. Positions 62 to 107 (ITTTTTSTSTTNNNNITTTSTSSQQSNGTLSSSSSPTIQSIPTTPI) are enriched in low complexity. Residues 130 to 450 (LREKDELSLI…KMRKQMADLK (321 aa)) adopt a coiled-coil conformation. In terms of domain architecture, IF rod spans 132-515 (EKDELSLIHN…ELVKGFEKTV (384 aa)). Residues 519 to 522 (KRKR) carry the Nuclear localization signal motif. Residues 519–584 (KRKRSKLQHE…PTGPEQSELF (66 aa)) form a disordered region. Polar residues predominate over residues 532–545 (AANQDQNGMTIEEQ). Residues 546–564 (SSTSTTTTTSATGSSSSTS) show a composition bias toward low complexity. Positions 565–584 (HLDNIDSSKLPTGPEQSELF) are enriched in polar residues. Positions 575–698 (PTGPEQSELF…EETTTVTLPA (124 aa)) constitute an LTD domain. The CAAX motif signature appears at 713–716 (CLIM).

This sequence belongs to the intermediate filament family. In terms of assembly, homodimer. Lamin dimers then assemble into dimeric head-to-tail polymers. Ultimately, two head-to-tail polymers assemble laterally into a protofilament with a uniformly shaped rod of 3.5 nm in diameter.

It is found in the nucleus lamina. The protein localises to the nucleus envelope. It localises to the nucleus inner membrane. Its function is as follows. Lamins are intermediate filament proteins that assemble into a filamentous meshwork, and which constitute the major components of the nuclear lamina, a fibrous layer on the nucleoplasmic side of the inner nuclear membrane. Lamins provide a framework for the nuclear envelope, bridging the nuclear envelope and chromatin, thereby playing an important role in nuclear assembly, chromatin organization, nuclear membrane and telomere dynamics. The structural integrity of the lamina is strictly controlled by the cell cycle, as seen by the disintegration and formation of the nuclear envelope in prophase and telophase, respectively. Helps to maintain integrity of nuclear structures in response to mechanical stress. The chain is Lamin-like protein from Dictyostelium discoideum (Social amoeba).